The following is a 940-amino-acid chain: MDKIEVRGARTHNLKNINLVIPRDKLIVVTGLSGSGKSSLAFDTLYAEGQRRYVESLSAYARQFLSLMEKPDVDHIEGLSPAISIEQKSTSHNPRSTVGTITEIHDYLRLLFARVGEPRCPDHDVPLAAQTVSQMVDNVLSQPEGKRLMLLAPIIKERKGEHTKTLENLASQGYIRARIDGEVCDLSDPPKLELQKKHTIEVVVDRFKVRDDLTQRLAESFETALELSGGTAVVADMDDPKAEELLFSANFACPICGYSMRELEPRLFSFNNPAGACPTCDGLGVQQYFDPDRVIQNPELSLAGGAIRGWDRRNFYYFQMLKSLADHYKFDVEAPWGSLSANVHKVVLYGSGKENIEFKYMNDRGDTSIRRHPFEGVLHNMERRYKETESSAVREELAKFISNRPCASCEGTRLRREARHVYVENTPLPAISDMSIGHAMEFFNNLKLAGQRAKIAEKILKEIGDRLKFLVNVGLNYLTLSRSAETLSGGEAQRIRLASQIGAGLVGVMYVLDEPSIGLHQRDNERLLGTLIHLRDLGNTVIVVEHDEDAIRAADHVIDIGPGAGVHGGEVVAEGPLEAIMAVPESLTGQYMSGKRKIEVPKKRVPANPEKVLKLTGARGNNLKDVTLTLPVGLFTCITGVSGSGKSTLINDTLFPIAQRQLNGATIAEPAPYRDIQGLEHFDKVIDIDQSPIGRTPRSNPATYTGVFTPVRELFAGVPESRARGYTPGRFSFNVRGGRCEACQGDGVIKVEMHFLPDIYVPCDQCKGKRYNRETLEIKYKGKTIHEVLDMTIEEAREFFDAVPALARKLQTLMDVGLTYIRLGQSATTLSGGEAQRVKLARELSKRGTGQTLYILDEPTTGLHFADIQQLLDVLHKLRDQGNTIVVIEHNLDVIKTADWIVDLGPEGGSGGGEILVSGTPETVAECEASHTARFLKPML.

31-38 (GLSGSGKS) serves as a coordination point for ATP. A C4-type zinc finger spans residues 253–280 (CPICGYSMRELEPRLFSFNNPAGACPTC). ABC transporter domains lie at 310–587 (WDRR…PESL) and 607–937 (ANPE…RFLK). 640–647 (GVSGSGKS) is a binding site for ATP. The C4-type zinc-finger motif lies at 740–766 (CEACQGDGVIKVEMHFLPDIYVPCDQC).

It belongs to the ABC transporter superfamily. UvrA family. In terms of assembly, forms a heterotetramer with UvrB during the search for lesions. Interacts with TRCF (Mfd). UvrB and TRCF binding to UvrA could be mutually exclusive.

The protein localises to the cytoplasm. Functionally, the UvrABC repair system catalyzes the recognition and processing of DNA lesions. UvrA is an ATPase and a DNA-binding protein. A damage recognition complex composed of 2 UvrA and 2 UvrB subunits scans DNA for abnormalities. When the presence of a lesion has been verified by UvrB, the UvrA molecules dissociate. This chain is UvrABC system protein A, found in Escherichia coli (strain K12).